Consider the following 359-residue polypeptide: 4-galactosyl-N-acetylglucosaminide 3-alpha-L-fucosyltransferase 9 (359 aa).

Residues 1–11 lie on the Cytoplasmic side of the membrane; it reads MTSTSKGILRP. Residues 12–32 traverse the membrane as a helical; Signal-anchor for type II membrane protein segment; it reads FLIVCIILGCFMACLLIYIKP. Over 33 to 359 the chain is Lumenal; that stretch reads TNSWIFSPME…VGNLEKWFWN (327 aa). N-linked (GlcNAc...) asparagine glycosylation occurs at Asn62. Residues 63–168 are acceptor-binding; sequence ETTILVWVWP…RRDSDIQVPY (106 aa). Gln75 contributes to the a beta-D-galactosyl-(1-&gt;4)-N-acetyl-beta-D-glucosaminyl derivative binding site. Cystine bridges form between Cys82–Cys335, Cys91–Cys338, and Cys190–Cys238. A glycan (N-linked (GlcNAc...) asparagine) is linked at Asn101. Position 137 (Glu137) interacts with a beta-D-galactosyl-(1-&gt;4)-N-acetyl-beta-D-glucosaminyl derivative. Glu137 (nucleophile) is an active-site residue. Residue Glu137 participates in GDP-beta-L-fucose binding. Asn153 is a glycosylation site (N-linked (GlcNAc...) asparagine). GDP-beta-L-fucose-binding residues include Tyr168, Val192, Ser194, Asn195, Arg202, Val226, Tyr241, Asn246, Tyr252, Glu255, and Lys256. The tract at residues 169–326 is donor-binding; it reads GFLTVSTNPF…NWRKDFTVNL (158 aa). An acceptor-binding region spans residues 327-359; sequence PRFWESHACLACDHVKRHQEYKSVGNLEKWFWN.

The protein belongs to the glycosyltransferase 10 family. In terms of assembly, homodimer. N-glycosylated with complex-type N-glycans. The glycan alpha-D-Man-(1-&gt;3)-beta-D-Man-(1-&gt;4)-GlcNAc-(1-&gt;4)-GlcNAc is attached at Asn-153. As to expression, strongly expressed in forebrain and stomach, lower expression in spleen and peripheral blood leukocytes, and no expression in small intestine, colon, liver, lung, kidney, adrenal cortex or uterus. Highly expressed in granulocytes. Not expressed in monocytes.

It is found in the golgi apparatus. Its subcellular location is the trans-Golgi network membrane. The protein localises to the golgi apparatus membrane. It carries out the reaction a beta-D-galactosyl-(1-&gt;4)-N-acetyl-beta-D-glucosaminyl derivative + GDP-beta-L-fucose = a beta-D-galactosyl-(1-&gt;4)-[alpha-L-fucosyl-(1-&gt;3)]-N-acetyl-beta-D-glucosaminyl derivative + GDP + H(+). It catalyses the reaction an alpha-Neu5Ac-(2-&gt;3)-beta-D-Gal-(1-&gt;4)-beta-D-GlcNAc-(1-&gt;3)-beta-D-Gal-(1-&gt;4)-beta-D-GlcNAc derivative + GDP-beta-L-fucose = an alpha-Neu5Ac-(2-&gt;3)-beta-D-Gal-(1-&gt;4)-beta-D-GlcNAc-(1-&gt;3)-beta-D-Gal-(1-&gt;4)-[alpha-L-Fuc-(1-&gt;3)]-beta-D-GlcNAc derivative + GDP + H(+). The catalysed reaction is alpha-N-glycoloylneuraminosyl-(2-&gt;3)-beta-D-galactosyl-(1-&gt;4)-N-acetyl-beta-D-glucosaminyl-(1-&gt;3)-beta-D-galactosyl-(1-&gt;4)-N-acetyl-beta-D-glucosaminyl-(1-&gt;3)-beta-D-galactosyl-(1-&gt;4)-beta-D-glucosyl-(1&lt;-&gt;1')-ceramide + GDP-beta-L-fucose = alpha-N-glycoloylneuraminosyl-(2-&gt;3)-beta-D-galactosyl-(1-&gt;4)-N-acetyl-beta-D-glucosaminyl-(1-&gt;3)-beta-D-galactosyl-(1-&gt;4)-[alpha-L-fucosyl-(1-&gt;3)]-N-acetyl-beta-D-glucosaminyl-(1-&gt;3)-beta-D-galactosyl-(1-&gt;4)-beta-D-glucosyl-(1&lt;-&gt;1')-ceramide + GDP + H(+). The enzyme catalyses alpha-D-galactosyl-(1-&gt;3)-beta-D-galactosyl-(1-&gt;4)-N-acetyl-beta-D-glucosaminyl-(1-&gt;3)-beta-D-galactosyl-(1-&gt;4)-beta-D-glucosyl-(1&lt;-&gt;1')-ceramide + GDP-beta-L-fucose = a neolactoside IV(3)-alpha-Gal,III(3)-alpha-Fuc-nLc4Cer + GDP + H(+). It carries out the reaction a neolactoside nLc4Cer + GDP-beta-L-fucose = a neolactoside III(3)-alpha-Fuc-nLc4Cer + GDP + H(+). It catalyses the reaction an N-acetyl-alpha-neuraminyl-(2-&gt;3)-beta-D-galactosyl-(1-&gt;4)-N-acetyl-beta-D-glucosaminyl derivative + GDP-beta-L-fucose = an alpha-Neu5Ac-(2-&gt;3)-beta-D-Gal-(1-&gt;4)-[alpha-L-Fuc-(1-&gt;3)]-beta-D-GlcNAc derivative + GDP + H(+). The catalysed reaction is beta-D-Gal-(1-&gt;4)-beta-D-GlcNAc-(1-&gt;3)-beta-D-Gal-(1-&gt;4)-D-Glc + GDP-beta-L-fucose = beta-D-Gal-(1-&gt;4)-[alpha-L-Fuc-(1-&gt;3)]-beta-D-GlcNAc-(1-&gt;3)-beta-D-Gal-(1-&gt;4)-D-Glc + GDP + H(+). The enzyme catalyses an alpha-L-Fuc-(1-&gt;2)-beta-D-Gal-(1-&gt;4)-beta-D-GlcNAc derivative + GDP-beta-L-fucose = an alpha-L-Fuc-(1-&gt;2)-beta-D-Gal-(1-&gt;4)-[alpha-L-Fuc-(1-&gt;3)]-beta-D-GlcNAc derivative + GDP + H(+). It functions in the pathway protein modification; protein glycosylation. Its pathway is glycolipid biosynthesis. Activated by Mn2+. In terms of biological role, catalyzes alpha(1-&gt;3) linkage of fucosyl moiety transferred from GDP-beta-L-fucose to N-acetyl glucosamine (GlcNAc) within type 2 lactosamine (LacNAc, beta-D-Gal-(1-&gt;4)-beta-D-GlcNAc-) glycan attached to glycolipids and N- or O-linked glycoproteins. Fucosylates distal type 2 LacNAc and its fucosylated (H-type 2 LacNAc) and sialylated (sialyl-type 2 LacNAc) derivatives to form Lewis x (Lex) (CD15) and Lewis y (Ley) antigenic epitopes involved in cell adhesion and differentiation. Generates Lex epitopes in the brain, presumably playing a role in the maintenance of neuronal stemness and neurite outgrowth in progenitor neural cells. Fucosylates the internal type 2 LacNAc unit of the polylactosamine chain to form VIM-2 antigen that serves as recognition epitope for SELE. Can also modify milk oligosaccharides, in particular type 2 tetrasaccharide LNnT. The chain is 4-galactosyl-N-acetylglucosaminide 3-alpha-L-fucosyltransferase 9 from Homo sapiens (Human).